Reading from the N-terminus, the 117-residue chain is UPF0342 protein BLi01058/BL02870 (117 aa).

This sequence belongs to the UPF0342 family.

This Bacillus licheniformis (strain ATCC 14580 / DSM 13 / JCM 2505 / CCUG 7422 / NBRC 12200 / NCIMB 9375 / NCTC 10341 / NRRL NRS-1264 / Gibson 46) protein is UPF0342 protein BLi01058/BL02870.